The sequence spans 467 residues: UDP-N-acetylmuramoylalanine--D-glutamate ligase (467 aa).

121–127 provides a ligand contact to ATP; that stretch reads GTNGKST.

The protein belongs to the MurCDEF family.

Its subcellular location is the cytoplasm. It catalyses the reaction UDP-N-acetyl-alpha-D-muramoyl-L-alanine + D-glutamate + ATP = UDP-N-acetyl-alpha-D-muramoyl-L-alanyl-D-glutamate + ADP + phosphate + H(+). Its pathway is cell wall biogenesis; peptidoglycan biosynthesis. Functionally, cell wall formation. Catalyzes the addition of glutamate to the nucleotide precursor UDP-N-acetylmuramoyl-L-alanine (UMA). This is UDP-N-acetylmuramoylalanine--D-glutamate ligase from Brucella suis biovar 1 (strain 1330).